The following is a 277-amino-acid chain: Purine nucleoside phosphorylase 2 (277 aa).

Phosphate is bound by residues H65, 85-87 (RGH), and A117. Position 197 (E197) interacts with a purine D-ribonucleoside. S216 contacts phosphate. A purine D-ribonucleoside is bound at residue N239.

Belongs to the PNP/MTAP phosphorylase family. Hexamer. Dimer of trimers.

The catalysed reaction is a purine D-ribonucleoside + phosphate = a purine nucleobase + alpha-D-ribose 1-phosphate. It functions in the pathway purine metabolism; xanthosine degradation. The protein operates within purine metabolism; purine nucleoside salvage. With respect to regulation, rapidly inactivated by p-chloromercuriphenylsulfonic acid (p-CMB). Dithiothreitol incubation restores the activity. The purine nucleoside phosphorylases catalyze the phosphorolytic breakdown of the N-glycosidic bond in the beta-(deoxy)ribonucleoside molecules, with the formation of the corresponding free purine bases and pentose-1-phosphate. This protein can degrade all purine nucleosides including xanthosine, inosine and guanosine, but cannot cleave adenosine, deoxyadenosine or hypoxanthine arabinoside. Has a preference for the neutral over the monoanionic form of xanthosine. This is Purine nucleoside phosphorylase 2 (xapA) from Escherichia coli (strain K12).